Here is a 105-residue protein sequence, read N- to C-terminus: Venom metalloprotease inhibitor (105 aa).

Residues 1 to 21 (MFRFVCVLFIALVVFCTTTSA) form the signal peptide. 5 disulfide bridges follow: cysteine 26–cysteine 61, cysteine 35–cysteine 57, cysteine 39–cysteine 50, cysteine 43–cysteine 83, and cysteine 63–cysteine 77. The region spanning 26–83 (CNRPNEEYRCGSACQTTCATLGQRCPIMNIRCNDACYCKEGYARYGDDTGMCVSISQC) is the TIL domain.

The protein belongs to the serine protease inhibitor-like (TIL domain-containing) family. As to expression, expressed by the venom gland.

It is found in the secreted. Its function is as follows. Inhibits metalloprotease (human MMP3), trypsin, chymotrypsin, plasmin and microbial serine protease (proteinase K). Exhibits antifibrinolytic activity by binding plasmin and inhibiting it. Does not inhibit elastase, thrombin or microbial serine protease (subtilisin A). In Bombus ignitus (Bumblebee), this protein is Venom metalloprotease inhibitor.